The primary structure comprises 300 residues: 33 kDa chaperonin (300 aa).

Cystine bridges form between Cys235–Cys237 and Cys269–Cys272.

It belongs to the HSP33 family. In terms of processing, under oxidizing conditions two disulfide bonds are formed involving the reactive cysteines. Under reducing conditions zinc is bound to the reactive cysteines and the protein is inactive.

It is found in the cytoplasm. Redox regulated molecular chaperone. Protects both thermally unfolding and oxidatively damaged proteins from irreversible aggregation. Plays an important role in the bacterial defense system toward oxidative stress. This chain is 33 kDa chaperonin, found in Pseudomonas syringae pv. tomato (strain ATCC BAA-871 / DC3000).